The chain runs to 496 residues: NADP-dependent glyceraldehyde-3-phosphate dehydrogenase (496 aa).

Substrate contacts are provided by residues Arg116 and 169-170 (NY). Positions 192, 195, and 230 each coordinate NADP(+). 245-249 (GGDTG) contributes to the NAD(+) binding site. Glu264 serves as the catalytic Proton acceptor. 297 to 299 (RCT) is a substrate binding site. The active-site Nucleophile is Cys298. Position 391 (Glu391) interacts with NADP(+). Arg451 is a substrate binding site.

Belongs to the aldehyde dehydrogenase family.

It localises to the cytoplasm. The catalysed reaction is D-glyceraldehyde 3-phosphate + NADP(+) + H2O = (2R)-3-phosphoglycerate + NADPH + 2 H(+). Important as a means of generating NADPH for biosynthetic reactions. The protein is NADP-dependent glyceraldehyde-3-phosphate dehydrogenase (GAPN) of Nicotiana plumbaginifolia (Leadwort-leaved tobacco).